Consider the following 201-residue polypeptide: Adenylyl-sulfate kinase (201 aa).

Residue 35-42 (GLSGSGKS) participates in ATP binding. The active-site Phosphoserine intermediate is the Ser-109.

Belongs to the APS kinase family.

The catalysed reaction is adenosine 5'-phosphosulfate + ATP = 3'-phosphoadenylyl sulfate + ADP + H(+). It participates in sulfur metabolism; hydrogen sulfide biosynthesis; sulfite from sulfate: step 2/3. Functionally, catalyzes the synthesis of activated sulfate. The protein is Adenylyl-sulfate kinase of Shigella boydii serotype 18 (strain CDC 3083-94 / BS512).